A 450-amino-acid polypeptide reads, in one-letter code: Tubulin alpha-3 chain (450 aa).

A GTP-binding site is contributed by glutamine 11. Position 40 is an N6-acetyllysine (lysine 40). GTP contacts are provided by glutamate 71, glycine 144, threonine 145, threonine 179, asparagine 206, and asparagine 228. A Mg(2+)-binding site is contributed by glutamate 71. The active site involves glutamate 254.

It belongs to the tubulin family. As to quaternary structure, dimer of alpha and beta chains. A typical microtubule is a hollow water-filled tube with an outer diameter of 25 nm and an inner diameter of 15 nM. Alpha-beta heterodimers associate head-to-tail to form protofilaments running lengthwise along the microtubule wall with the beta-tubulin subunit facing the microtubule plus end conferring a structural polarity. Microtubules usually have 13 protofilaments but different protofilament numbers can be found in some organisms and specialized cells. Requires Mg(2+) as cofactor. Undergoes a tyrosination/detyrosination cycle, the cyclic removal and re-addition of a C-terminal tyrosine residue by the enzymes tubulin tyrosine carboxypeptidase (TTCP) and tubulin tyrosine ligase (TTL), respectively. In terms of processing, acetylation of alpha chains at Lys-40 stabilizes microtubules and affects affinity and processivity of microtubule motors. This modification has a role in multiple cellular functions, ranging from cell motility, cell cycle progression or cell differentiation to intracellular trafficking and signaling.

The protein resides in the cytoplasm. The protein localises to the cytoskeleton. The enzyme catalyses GTP + H2O = GDP + phosphate + H(+). Functionally, tubulin is the major constituent of microtubules, a cylinder consisting of laterally associated linear protofilaments composed of alpha- and beta-tubulin heterodimers. Microtubules grow by the addition of GTP-tubulin dimers to the microtubule end, where a stabilizing cap forms. Below the cap, tubulin dimers are in GDP-bound state, owing to GTPase activity of alpha-tubulin. The protein is Tubulin alpha-3 chain (TUBA3) of Zea mays (Maize).